A 292-amino-acid polypeptide reads, in one-letter code: uncharacterized protein (292 aa).

Active-site charge relay system residues include serine 44 and tyrosine 106. Tyrosine 132 (proton donor) is an active-site residue. Catalysis depends on lysine 161, which acts as the Schiff-base intermediate with substrate.

This sequence belongs to the DapA family. Homotetramer.

The protein resides in the cytoplasm. This is an uncharacterized protein from Thermoplasma acidophilum (strain ATCC 25905 / DSM 1728 / JCM 9062 / NBRC 15155 / AMRC-C165).